Consider the following 1058-residue polypeptide: Non-canonical non-ribosomal peptide synthetase FUB8 (1058 aa).

Positions 43-365 (EISRDEPDRV…LASVVMHPDE (323 aa)) are adenylation (A) domain. Residues 566-643 (TTEDVVRSGI…QLSHSVWTHL (78 aa)) enclose the Carrier domain. S601 carries the post-translational modification O-(pantetheine 4'-phosphoryl)serine. The thioester reductase (TR) domain stretch occupies residues 680 to 921 (LTGTTGEIGS…IPIDLLAEVI (242 aa)).

Its pathway is mycotoxin biosynthesis. Non-canonical non-ribosomal peptide synthetase; part of the gene cluster that mediates the biosynthesis of fusaric acid, a mycotoxin with low to moderate toxicity to animals and humans, but with high phytotoxic properties. L-aspartate is suggested as fusaric acid amino acid precursor that is activated and further processed to O-acetyl-L-homoserine by cluster enzymes aspartate kinase FUB3 and homoserine O-acetyltransferase FUB5, as well as enzymes of the primary metabolism. The polyketide synthase (PKS) FUB1 generates the triketide trans-2-hexenal which is presumptively released by the hydrolase FUB4 and linked to the NRPS-bound amino acid precursor by NAD(P)-dependent dehydrogenase FUB6. FUB1, FUB4, and the non-canonical NRPS Fub8 may form an enzyme complex. Further processing of the NRPS-bound intermediate might be carried out by FUB6 and the sulfhydrylase FUB7, enabling a spontaneous electrocyclization to close the carbon backbone of fusaric acid. Dihydrofusaric acid is likely to be released via reduction by the thioester reductase (TR) domain of FUB8 whereupon the final oxidation to fusaric acid may (also) be performed by the FMN-dependent dehydrogenase FUB9. The sequence is that of Non-canonical non-ribosomal peptide synthetase FUB8 from Gibberella moniliformis (strain M3125 / FGSC 7600) (Maize ear and stalk rot fungus).